A 154-amino-acid chain; its full sequence is Urease accessory protein UreE (154 aa).

Positions 135 to 154 are disordered; it reads PENGAYHGTGGHHHHHHDHE. Over residues 144-154 the composition is skewed to basic residues; the sequence is GGHHHHHHDHE.

It belongs to the UreE family.

The protein resides in the cytoplasm. Involved in urease metallocenter assembly. Binds nickel. Probably functions as a nickel donor during metallocenter assembly. This chain is Urease accessory protein UreE, found in Teredinibacter turnerae (strain ATCC 39867 / T7901).